A 429-amino-acid chain; its full sequence is Apolipoprotein A-IV (429 aa).

Positions 1–20 (MFLKAVVLTLALVAVTGARA) are cleaved as a signal peptide. Repeat copies occupy residues 33-54 (DYFS…KSEL), 60-81 (ALFQ…KKLV), 82-103 (PFAT…EEIR), 115-136 (PHAN…QRLE), 137-158 (PYTD…RQLT), 159-180 (PYAQ…TSLR), 181-202 (PHAD…ERLT), 203-224 (PYAD…RSLA), 225-246 (PYAQ…FQMK), 247-268 (KNAE…QRLA), 269-286 (PLAE…EGLQ), 287-308 (KSLA…LRVE), and 309-330 (PYGE…QKLG). The interval 33–330 (DYFSQLSSNA…QMEQLRQKLG (298 aa)) is 13 X 22 AA approximate tandem repeats. Residues 359–429 (KEKESQDNTL…QVQMLAPLES (71 aa)) form a disordered region. Residues 381–420 (QEQQQEQEQEQQQQQEQQQQQEQQREQQQQEQQQEQQQEQ) are compositionally biased toward low complexity.

The protein belongs to the apolipoprotein A1/A4/E family. Homodimer. In terms of processing, phosphorylation sites are present in the extracellular medium. In terms of tissue distribution, secreted in plasma.

The protein localises to the secreted. May have a role in chylomicrons and VLDL secretion and catabolism. Required for efficient activation of lipoprotein lipase by ApoC-II; potent activator of LCAT. Apoa-IV is a major component of HDL and chylomicrons. This chain is Apolipoprotein A-IV (APOA4), found in Macaca fascicularis (Crab-eating macaque).